The primary structure comprises 251 residues: MSKAMSCEPTPWRATVLTLFPEMFPGPLGVSLAGRALATGLWALEVRDIRDSATDKHRSVDDTPAGGGPGMVLRADVLAAAIDAADAGETRPRLVMSPRGRPLTQAKVAELAAGPGPLIVCGRFEGIDQRVIDARDLEEVSIGDYVLSGGEIAALALLDACVRLLPGVMGKQGSALEESFSDGLLEYPQYTRPQLFEERPIPEILTSGDHAKVAAWRRAEAEKLTRARRPDLFATRPQPNRQKPPKNTTDG.

Residues Gly122 and Ile142 to Leu147 each bind S-adenosyl-L-methionine. Residues Arg226–Gly251 form a disordered region. Over residues Pro237 to Gly251 the composition is skewed to polar residues.

It belongs to the RNA methyltransferase TrmD family. In terms of assembly, homodimer.

The protein resides in the cytoplasm. It catalyses the reaction guanosine(37) in tRNA + S-adenosyl-L-methionine = N(1)-methylguanosine(37) in tRNA + S-adenosyl-L-homocysteine + H(+). Functionally, specifically methylates guanosine-37 in various tRNAs. The polypeptide is tRNA (guanine-N(1)-)-methyltransferase (Rhodopseudomonas palustris (strain BisB18)).